A 337-amino-acid polypeptide reads, in one-letter code: Phosphate acyltransferase (337 aa).

This sequence belongs to the PlsX family. As to quaternary structure, homodimer. Probably interacts with PlsY.

Its subcellular location is the cytoplasm. It catalyses the reaction a fatty acyl-[ACP] + phosphate = an acyl phosphate + holo-[ACP]. It participates in lipid metabolism; phospholipid metabolism. Catalyzes the reversible formation of acyl-phosphate (acyl-PO(4)) from acyl-[acyl-carrier-protein] (acyl-ACP). This enzyme utilizes acyl-ACP as fatty acyl donor, but not acyl-CoA. The chain is Phosphate acyltransferase from Latilactobacillus sakei subsp. sakei (strain 23K) (Lactobacillus sakei subsp. sakei).